The primary structure comprises 819 residues: Leucine--tRNA ligase (819 aa).

A 'HIGH' region motif is present at residues 51-61; it reads PYPSGNLHIGH. The 'KMSKS' region motif lies at 586-590; it reads KMSKS. Lysine 589 is an ATP binding site.

Belongs to the class-I aminoacyl-tRNA synthetase family.

It is found in the cytoplasm. The catalysed reaction is tRNA(Leu) + L-leucine + ATP = L-leucyl-tRNA(Leu) + AMP + diphosphate. The chain is Leucine--tRNA ligase from Deinococcus geothermalis (strain DSM 11300 / CIP 105573 / AG-3a).